Reading from the N-terminus, the 512-residue chain is 2-isopropylmalate synthase (512 aa).

The region spanning 4–266 (IEIFDTTLRD…TTKLNLKEIA (263 aa)) is the Pyruvate carboxyltransferase domain. Asp-13, His-201, His-203, and Asn-237 together coordinate Mn(2+). The regulatory domain stretch occupies residues 390–512 (QLESVQLAYG…GEPTPVSATI (123 aa)).

Belongs to the alpha-IPM synthase/homocitrate synthase family. LeuA type 1 subfamily. In terms of assembly, homodimer. Mn(2+) serves as cofactor.

It is found in the cytoplasm. The catalysed reaction is 3-methyl-2-oxobutanoate + acetyl-CoA + H2O = (2S)-2-isopropylmalate + CoA + H(+). The protein operates within amino-acid biosynthesis; L-leucine biosynthesis; L-leucine from 3-methyl-2-oxobutanoate: step 1/4. Its function is as follows. Catalyzes the condensation of the acetyl group of acetyl-CoA with 3-methyl-2-oxobutanoate (2-ketoisovalerate) to form 3-carboxy-3-hydroxy-4-methylpentanoate (2-isopropylmalate). The protein is 2-isopropylmalate synthase of Brevibacillus brevis (strain 47 / JCM 6285 / NBRC 100599).